The chain runs to 130 residues: MSKKKLNQPKKRIKRQILDGIAHIHASFNNTIVTITDRKGNTLGWATSGGSGFRGSRKSTPFAAQVAAEKCADRVKDYGIKNLEVMIKGPGPGRESTIRALNSSGFRITNIIDVTPIPHNGCRPSKKRRV.

This sequence belongs to the universal ribosomal protein uS11 family. In terms of assembly, part of the 30S ribosomal subunit. Interacts with proteins S7 and S18. Binds to IF-3.

Functionally, located on the platform of the 30S subunit, it bridges several disparate RNA helices of the 16S rRNA. Forms part of the Shine-Dalgarno cleft in the 70S ribosome. The polypeptide is Small ribosomal subunit protein uS11 (Buchnera aphidicola subsp. Cinara cedri (strain Cc)).